The following is a 184-amino-acid chain: GTP-binding protein Rheb (184 aa).

Lys-8 participates in a covalent cross-link: Glycyl lysine isopeptide (Lys-Gly) (interchain with G-Cter in ubiquitin). Ser-16, Val-17, Gly-18, Lys-19, Ser-20, Ser-21, Val-32, and Asp-33 together coordinate GDP. GTP-binding residues include Ser-16, Val-17, Gly-18, Lys-19, Ser-20, Ser-21, Val-32, Asp-33, Tyr-35, Pro-37, Thr-38, Gly-63, Asn-119, Lys-120, and Asp-122. A Mg(2+)-binding site is contributed by Ser-20. The Effector region signature appears at 35–43 (YDPTIENTF). Thr-38 lines the Mg(2+) pocket. Position 119 (Asn-119) interacts with GDP. Asp-122 contributes to the GDP binding site. The residue at position 130 (Ser-130) is a Phosphoserine; by MAPKAPK5. Ala-150 contributes to the GDP binding site. Ala-150 lines the GTP pocket. At Cys-181 the chain carries Cysteine methyl ester. Cys-181 is lipidated: S-farnesyl cysteine. A propeptide spans 182–184 (SVM) (removed in mature form).

The protein belongs to the small GTPase superfamily. Rheb family. In terms of assembly, associates with the mTORC1 complex (MTOR, MLST8 and RPTOR) in a guanyl nucleotide-independent manner. Interacts with TSC2. Interacts with MCRS1; the interaction maintains RHEB at the lysosome in its active GTP-bound form and prevents its interaction with the mTORC1 complex inhibitor TSC2, ensuring activation of the mTORC1 complex by RHEB. Interacts (when prenylated) with PDE6D; this promotes release from membranes. In terms of processing, farnesylation is important for efficiently activating mTORC1-mediated signaling. Polyubiquitinated in response to amino acid, promoting its interaction with MTOR and mTORC1 activation. Deubiquitination by ATXN3 promotes recruitment of the TSC-TBC complex and RHEB inactivation by TSC2. Monoubiquitinated at Lys-8 by RNF152, promoting its association with the TSC-TBC complex. Deubiquitinated at Lys-8 by USP4, promoting mTORC1 activation. Post-translationally, phosphorylation by MAPKAPK5 impairs GTP-binding and inactivation.

The protein localises to the endomembrane system. It localises to the lysosome membrane. It is found in the golgi apparatus membrane. The protein resides in the endoplasmic reticulum membrane. Its subcellular location is the cytoplasm. The protein localises to the cytosol. The enzyme catalyses GTP + H2O = GDP + phosphate + H(+). Alternates between an inactive form bound to GDP and an active form bound to GTP. Inactivated by the TSC-TBC complex via the GTPase activating protein (GAP) domain of TSC2. Autoinhibited by Tyr-35, which constrains the active site conformation, restricting the access of the catalytic Asp-65 to the nucleotide-binding pocket. In terms of biological role, small GTPase that acts as an allosteric activator of the canonical mTORC1 complex, an evolutionarily conserved central nutrient sensor that stimulates anabolic reactions and macromolecule biosynthesis to promote cellular biomass generation and growth. In response to nutrients, growth factors or amino acids, specifically activates the protein kinase activity of MTOR, the catalytic component of the mTORC1 complex: acts by causing a conformational change that allows the alignment of residues in the active site of MTOR, thereby enhancing the phosphorylation of ribosomal protein S6 kinase (RPS6KB1 and RPS6KB2) and EIF4EBP1 (4E-BP1). RHEB is also required for localization of the TSC-TBC complex to lysosomal membranes. In response to starvation, RHEB is inactivated by the TSC-TBC complex, preventing activation of mTORC1. Has low intrinsic GTPase activity. This chain is GTP-binding protein Rheb, found in Mus musculus (Mouse).